A 270-amino-acid polypeptide reads, in one-letter code: Phosphatidylglycerol--prolipoprotein diacylglyceryl transferase (270 aa).

Transmembrane regions (helical) follow at residues 19–39, 56–76, 92–112, and 116–136; these read FPVY…LWLA, LVLI…VIFE, QGGL…ILFA, and GVSF…GQAI. R138 is a binding site for a 1,2-diacyl-sn-glycero-3-phospho-(1'-sn-glycerol). The next 3 helical transmembrane spans lie at 178–198, 206–226, and 236–256; these read HPTF…LLAL, GELF…VEGL, and LRIA…FIIV.

Belongs to the Lgt family.

It is found in the cell membrane. It catalyses the reaction L-cysteinyl-[prolipoprotein] + a 1,2-diacyl-sn-glycero-3-phospho-(1'-sn-glycerol) = an S-1,2-diacyl-sn-glyceryl-L-cysteinyl-[prolipoprotein] + sn-glycerol 1-phosphate + H(+). Its pathway is protein modification; lipoprotein biosynthesis (diacylglyceryl transfer). Functionally, catalyzes the transfer of the diacylglyceryl group from phosphatidylglycerol to the sulfhydryl group of the N-terminal cysteine of a prolipoprotein, the first step in the formation of mature lipoproteins. This Bacillus cereus (strain G9842) protein is Phosphatidylglycerol--prolipoprotein diacylglyceryl transferase.